The sequence spans 261 residues: Cytochrome c oxidase subunit 3 (261 aa).

At 1–15 (MTHQTHAYHMVNPSP) the chain is on the mitochondrial matrix side. Residues 16-34 (WPLTGALSALLMTSGLIMW) form a helical membrane-spanning segment. Over 35 to 40 (FHFNSM) the chain is Mitochondrial intermembrane. A helical transmembrane segment spans residues 41–66 (TLLMLGLTTNMLTMYQWWRDIIREST). The Mitochondrial matrix segment spans residues 67-72 (FQGHHT). The chain crosses the membrane as a helical span at residues 73–105 (SAVQKGLRYGMILFIISEVLFFTGFFWAFYHSS). The Mitochondrial intermembrane portion of the chain corresponds to 106-128 (LAPTPELGGCWPPTGIHPLNPLE). A helical transmembrane segment spans residues 129–152 (VPLLNTSVLLASGVSITWAHHSLM). The Mitochondrial matrix portion of the chain corresponds to 153–155 (EGN). The helical transmembrane segment at 156-183 (RNHMLQALFITIALGVYFTLLQASEYYE) threads the bilayer. Over 184-190 (APFTISD) the chain is Mitochondrial intermembrane. A helical membrane pass occupies residues 191 to 223 (GVYGSTFFVATGFHGLHVIIGSTFLIVCFFRQL). Topologically, residues 224 to 232 (KFHFTSTHH) are mitochondrial matrix. Residues 233–256 (FGFEAAAWYWHFVDVVWLFLYVSI) form a helical membrane-spanning segment. The Mitochondrial intermembrane portion of the chain corresponds to 257 to 261 (YWWGS).

Belongs to the cytochrome c oxidase subunit 3 family. In terms of assembly, component of the cytochrome c oxidase (complex IV, CIV), a multisubunit enzyme composed of 14 subunits. The complex is composed of a catalytic core of 3 subunits MT-CO1, MT-CO2 and MT-CO3, encoded in the mitochondrial DNA, and 11 supernumerary subunits COX4I, COX5A, COX5B, COX6A, COX6B, COX6C, COX7A, COX7B, COX7C, COX8 and NDUFA4, which are encoded in the nuclear genome. The complex exists as a monomer or a dimer and forms supercomplexes (SCs) in the inner mitochondrial membrane with NADH-ubiquinone oxidoreductase (complex I, CI) and ubiquinol-cytochrome c oxidoreductase (cytochrome b-c1 complex, complex III, CIII), resulting in different assemblies (supercomplex SCI(1)III(2)IV(1) and megacomplex MCI(2)III(2)IV(2)).

The protein localises to the mitochondrion inner membrane. The catalysed reaction is 4 Fe(II)-[cytochrome c] + O2 + 8 H(+)(in) = 4 Fe(III)-[cytochrome c] + 2 H2O + 4 H(+)(out). Component of the cytochrome c oxidase, the last enzyme in the mitochondrial electron transport chain which drives oxidative phosphorylation. The respiratory chain contains 3 multisubunit complexes succinate dehydrogenase (complex II, CII), ubiquinol-cytochrome c oxidoreductase (cytochrome b-c1 complex, complex III, CIII) and cytochrome c oxidase (complex IV, CIV), that cooperate to transfer electrons derived from NADH and succinate to molecular oxygen, creating an electrochemical gradient over the inner membrane that drives transmembrane transport and the ATP synthase. Cytochrome c oxidase is the component of the respiratory chain that catalyzes the reduction of oxygen to water. Electrons originating from reduced cytochrome c in the intermembrane space (IMS) are transferred via the dinuclear copper A center (CU(A)) of subunit 2 and heme A of subunit 1 to the active site in subunit 1, a binuclear center (BNC) formed by heme A3 and copper B (CU(B)). The BNC reduces molecular oxygen to 2 water molecules using 4 electrons from cytochrome c in the IMS and 4 protons from the mitochondrial matrix. The chain is Cytochrome c oxidase subunit 3 (MT-CO3) from Damaliscus lunatus (Tsessebe).